A 398-amino-acid polypeptide reads, in one-letter code: Formate-dependent phosphoribosylglycinamide formyltransferase (398 aa).

N(1)-(5-phospho-beta-D-ribosyl)glycinamide-binding positions include 21–22 (EL) and Glu-81. Residues Arg-113, Lys-154, 194 to 197 (EEYV), and Glu-202 contribute to the ATP site. The 197-residue stretch at 118 to 314 (RFAAEKVKVP…EFQVHVRSAL (197 aa)) folds into the ATP-grasp domain. Mg(2+)-binding residues include Glu-273 and Glu-285. Residues Asp-292, Lys-362, and 369–370 (RR) contribute to the N(1)-(5-phospho-beta-D-ribosyl)glycinamide site.

Belongs to the PurK/PurT family. As to quaternary structure, homodimer.

The enzyme catalyses N(1)-(5-phospho-beta-D-ribosyl)glycinamide + formate + ATP = N(2)-formyl-N(1)-(5-phospho-beta-D-ribosyl)glycinamide + ADP + phosphate + H(+). The protein operates within purine metabolism; IMP biosynthesis via de novo pathway; N(2)-formyl-N(1)-(5-phospho-D-ribosyl)glycinamide from N(1)-(5-phospho-D-ribosyl)glycinamide (formate route): step 1/1. In terms of biological role, involved in the de novo purine biosynthesis. Catalyzes the transfer of formate to 5-phospho-ribosyl-glycinamide (GAR), producing 5-phospho-ribosyl-N-formylglycinamide (FGAR). Formate is provided by PurU via hydrolysis of 10-formyl-tetrahydrofolate. This is Formate-dependent phosphoribosylglycinamide formyltransferase from Sulfolobus acidocaldarius (strain ATCC 33909 / DSM 639 / JCM 8929 / NBRC 15157 / NCIMB 11770).